Reading from the N-terminus, the 546-residue chain is Oncoprotein-induced transcript 3 protein (546 aa).

A signal peptide spans 1–16 (MPLSLLLACLFTTVTL). 2 N-linked (GlcNAc...) asparagine glycosylation sites follow: N89 and N116. Residues 182–222 (DENECEHNNGGCSEICVNLKNSHRCACGVGRVLRSDGKTCE) enclose the EGF-like; calcium-binding domain. 3 cysteine pairs are disulfide-bonded: C186–C197, C193–C206, and C208–C221. The 256-residue stretch at 261 to 516 (TCQVPVLCKS…SRCAQGCHRR (256 aa)) folds into the ZP domain. N299 carries N-linked (GlcNAc...) asparagine glycosylation. Residues 524 to 546 (DEDSAGLQSQTLTGGPISIDWEE) form a disordered region.

Its subcellular location is the nucleus envelope. Functionally, may be involved in hepatocellular function and development. This chain is Oncoprotein-induced transcript 3 protein (Oit3), found in Rattus norvegicus (Rat).